The following is a 213-amino-acid chain: MEETKSRFRRICVFCGSSSGNKTTYHDAALQLAHQLVERNIDLVYGGGSVGLMGLISQAVHDGGRHVLGIIPKSLAPREITGESIGEVITVSTMHQRKAEMGRQADAFIALPGGYGTFEELLEVITWSQLGIHTKPVGLLNVDGFYDSLLTFIDKAVDEGFVSSTARRIIVSAPNAPQLLQLLEEYVPKHDDFVSKMVWDNTTDAFTLEGDSF.

Residues Glu79, 97-98, 114-120, and Thr126 contribute to the substrate site; these read RK and GYGTFEE.

It belongs to the LOG family. As to expression, expressed in roots and shoots. Detected in root hairs.

It is found in the cytoplasm. It localises to the nucleus. It catalyses the reaction N(6)-(dimethylallyl)adenosine 5'-phosphate + H2O = N(6)-dimethylallyladenine + D-ribose 5-phosphate. It carries out the reaction 9-ribosyl-trans-zeatin 5'-phosphate + H2O = trans-zeatin + D-ribose 5-phosphate. Cytokinin-activating enzyme working in the direct activation pathway. Phosphoribohydrolase that converts inactive cytokinin nucleotides to the biologically active free-base forms. The sequence is that of Cytokinin riboside 5'-monophosphate phosphoribohydrolase LOG2 (LOG2) from Arabidopsis thaliana (Mouse-ear cress).